The primary structure comprises 996 residues: Alanine--tRNA ligase, chloroplastic/mitochondrial (996 aa).

Positions 677, 681, 779, and 783 each coordinate Zn(2+).

The protein belongs to the class-II aminoacyl-tRNA synthetase family. In terms of assembly, monomer. It depends on Zn(2+) as a cofactor.

It localises to the plastid. Its subcellular location is the chloroplast. The protein resides in the mitochondrion. It catalyses the reaction tRNA(Ala) + L-alanine + ATP = L-alanyl-tRNA(Ala) + AMP + diphosphate. Functionally, catalyzes the attachment of alanine to tRNA(Ala) in a two-step reaction: alanine is first activated by ATP to form Ala-AMP and then transferred to the acceptor end of tRNA(Ala). Also edits incorrectly charged tRNA(Ala) via its editing domain. The polypeptide is Alanine--tRNA ligase, chloroplastic/mitochondrial (Oryza sativa subsp. japonica (Rice)).